Consider the following 239-residue polypeptide: MAAAKKPRVVLLDIEGTVCPISFVKDVLFPYALSALPSTLAQEWDAPAFARYRAAFPAEHASTPSALAAHARDLMARDVKIGYLKALQGYLWEAGYASGALRAPLFEDVAPKVREWTSAAGEEGGVARVMIYSSGSVPAQKLLFRHTSGEPADLTDAITDYFDTVNAGPKTEPASYERIAAKYPEVPAGEWLFLSDNVREVEAAREAGMRACVVQRPGNAELPEDVRGRLEVVESFEEL.

Mg(2+)-binding residues include Asp-13 and Glu-15. Residues Ser-133–Ser-134 and Lys-170 contribute to the substrate site. Position 196 (Asp-196) interacts with Mg(2+).

This sequence belongs to the HAD-like hydrolase superfamily. MasA/MtnC family. As to quaternary structure, monomer. Mg(2+) is required as a cofactor.

It is found in the cytoplasm. It localises to the nucleus. It catalyses the reaction 5-methylsulfanyl-2,3-dioxopentyl phosphate + H2O = 1,2-dihydroxy-5-(methylsulfanyl)pent-1-en-3-one + phosphate. The protein operates within amino-acid biosynthesis; L-methionine biosynthesis via salvage pathway; L-methionine from S-methyl-5-thio-alpha-D-ribose 1-phosphate: step 3/6. It participates in amino-acid biosynthesis; L-methionine biosynthesis via salvage pathway; L-methionine from S-methyl-5-thio-alpha-D-ribose 1-phosphate: step 4/6. Bifunctional enzyme that catalyzes the enolization of 2,3-diketo-5-methylthiopentyl-1-phosphate (DK-MTP-1-P) into the intermediate 2-hydroxy-3-keto-5-methylthiopentenyl-1-phosphate (HK-MTPenyl-1-P), which is then dephosphorylated to form the acireductone 1,2-dihydroxy-3-keto-5-methylthiopentene (DHK-MTPene). The protein is Enolase-phosphatase E1 of Chaetomium globosum (strain ATCC 6205 / CBS 148.51 / DSM 1962 / NBRC 6347 / NRRL 1970) (Soil fungus).